A 105-amino-acid chain; its full sequence is Flagellar transcriptional regulator FlhD (105 aa).

It belongs to the FlhD family. Homodimer; disulfide-linked. Forms a heterohexamer composed of two FlhC and four FlhD subunits. Each FlhC binds a FlhD dimer, forming a heterotrimer, and a hexamer assembles by dimerization of two heterotrimers.

Its subcellular location is the cytoplasm. Functions in complex with FlhC as a master transcriptional regulator that regulates transcription of several flagellar and non-flagellar operons by binding to their promoter region. Activates expression of class 2 flagellar genes, including fliA, which is a flagellum-specific sigma factor that turns on the class 3 genes. Also regulates genes whose products function in a variety of physiological pathways. In Nitrosomonas europaea (strain ATCC 19718 / CIP 103999 / KCTC 2705 / NBRC 14298), this protein is Flagellar transcriptional regulator FlhD.